Consider the following 275-residue polypeptide: NH(3)-dependent NAD(+) synthetase (275 aa).

50–57 (GISGGVDS) contacts ATP. Asp56 lines the Mg(2+) pocket. Arg147 contributes to the deamido-NAD(+) binding site. Residue Thr167 participates in ATP binding. Glu172 contributes to the Mg(2+) binding site. The deamido-NAD(+) site is built by Lys180 and Asp187. Lys196 and Thr218 together coordinate ATP. Position 267–268 (267–268 (HK)) interacts with deamido-NAD(+).

This sequence belongs to the NAD synthetase family. As to quaternary structure, homodimer.

The enzyme catalyses deamido-NAD(+) + NH4(+) + ATP = AMP + diphosphate + NAD(+) + H(+). It participates in cofactor biosynthesis; NAD(+) biosynthesis; NAD(+) from deamido-NAD(+) (ammonia route): step 1/1. In terms of biological role, catalyzes the ATP-dependent amidation of deamido-NAD to form NAD. Uses ammonia as a nitrogen source. In Pseudomonas entomophila (strain L48), this protein is NH(3)-dependent NAD(+) synthetase.